A 56-amino-acid chain; its full sequence is Small ribosomal subunit protein uS14 (56 aa).

This sequence belongs to the universal ribosomal protein uS14 family. Component of the small ribosomal subunit (SSU). Mature yeast ribosomes consist of a small (40S) and a large (60S) subunit. The 40S small subunit contains 1 molecule of ribosomal RNA (18S rRNA) and at least 33 different proteins. The large 60S subunit contains 3 rRNA molecules (25S, 5.8S and 5S rRNA) and at least 46 different proteins.

It localises to the cytoplasm. Its subcellular location is the nucleus. Functionally, component of the ribosome, a large ribonucleoprotein complex responsible for the synthesis of proteins in the cell. The small ribosomal subunit (SSU) binds messenger RNAs (mRNAs) and translates the encoded message by selecting cognate aminoacyl-transfer RNA (tRNA) molecules. The large subunit (LSU) contains the ribosomal catalytic site termed the peptidyl transferase center (PTC), which catalyzes the formation of peptide bonds, thereby polymerizing the amino acids delivered by tRNAs into a polypeptide chain. The nascent polypeptides leave the ribosome through a tunnel in the LSU and interact with protein factors that function in enzymatic processing, targeting, and the membrane insertion of nascent chains at the exit of the ribosomal tunnel. In Schizosaccharomyces pombe (strain 972 / ATCC 24843) (Fission yeast), this protein is Small ribosomal subunit protein uS14 (rps29).